A 1008-amino-acid polypeptide reads, in one-letter code: Probable pre-mRNA-splicing factor ATP-dependent RNA helicase mog-4 (1008 aa).

2 disordered regions span residues 104–146 and 169–202; these read SSTK…SESD and NKKEKDKTRNVMEKKRDDNKDKEGSSMDKLREES. The span at 127–137 shows a compositional bias: low complexity; sequence KASKPGKSVKP. One can recognise a Helicase ATP-binding domain in the interval 374-538; sequence IEAVKEHQVL…FDDAPIFRIP (165 aa). 387–394 serves as a coordination point for ATP; it reads GETGSGKT. Positions 485 to 488 match the DEAH box motif; it reads DEAH. Residues 563 to 737 form the Helicase C-terminal domain; the sequence is TIMQIHLTQP…NVVLMLKSLG (175 aa). Residues 988–1008 are disordered; it reads EDATNKKMPKNKGKSGKDLER.

It belongs to the DEAD box helicase family. DEAH subfamily. DDX16/PRP8 sub-subfamily. In terms of assembly, interacts with mep-1 and smn-1.

It is found in the nucleus. It catalyses the reaction ATP + H2O = ADP + phosphate + H(+). Its function is as follows. ATP-binding RNA helicase involved in pre-mRNA splicing. Operates during embryogenesis. The sequence is that of Probable pre-mRNA-splicing factor ATP-dependent RNA helicase mog-4 (mog-4) from Caenorhabditis elegans.